The primary structure comprises 158 residues: 6,7-dimethyl-8-ribityllumazine synthase (158 aa).

Residues F22, 57–59, and 81–83 contribute to the 5-amino-6-(D-ribitylamino)uracil site; these read AVE and AVI. 86–87 provides a ligand contact to (2S)-2-hydroxy-3-oxobutyl phosphate; sequence GT. H89 acts as the Proton donor in catalysis. F114 is a 5-amino-6-(D-ribitylamino)uracil binding site. R128 contacts (2S)-2-hydroxy-3-oxobutyl phosphate.

It belongs to the DMRL synthase family. In terms of assembly, forms an icosahedral capsid composed of 60 subunits, arranged as a dodecamer of pentamers.

The enzyme catalyses (2S)-2-hydroxy-3-oxobutyl phosphate + 5-amino-6-(D-ribitylamino)uracil = 6,7-dimethyl-8-(1-D-ribityl)lumazine + phosphate + 2 H2O + H(+). The protein operates within cofactor biosynthesis; riboflavin biosynthesis; riboflavin from 2-hydroxy-3-oxobutyl phosphate and 5-amino-6-(D-ribitylamino)uracil: step 1/2. Its function is as follows. Catalyzes the formation of 6,7-dimethyl-8-ribityllumazine by condensation of 5-amino-6-(D-ribitylamino)uracil with 3,4-dihydroxy-2-butanone 4-phosphate. This is the penultimate step in the biosynthesis of riboflavin. The chain is 6,7-dimethyl-8-ribityllumazine synthase from Shewanella loihica (strain ATCC BAA-1088 / PV-4).